Here is a 1279-residue protein sequence, read N- to C-terminus: ATP-dependent helicase/nuclease subunit A (1279 aa).

In terms of domain architecture, UvrD-like helicase ATP-binding spans 4–499 (TKWTDEQRQA…VKLFKNFRSR (496 aa)). ATP is bound at residue 25–32 (AGAGAGKT). A UvrD-like helicase C-terminal domain is found at 526 to 853 (EEALKVGASY…RIMSIHKSKG (328 aa)).

This sequence belongs to the helicase family. AddA subfamily. In terms of assembly, heterodimer of AddA and AddB/RexB. Mg(2+) serves as cofactor.

It catalyses the reaction Couples ATP hydrolysis with the unwinding of duplex DNA by translocating in the 3'-5' direction.. The catalysed reaction is ATP + H2O = ADP + phosphate + H(+). The heterodimer acts as both an ATP-dependent DNA helicase and an ATP-dependent, dual-direction single-stranded exonuclease. Recognizes the chi site generating a DNA molecule suitable for the initiation of homologous recombination. The AddA nuclease domain is required for chi fragment generation; this subunit has the helicase and 3' -&gt; 5' nuclease activities. The sequence is that of ATP-dependent helicase/nuclease subunit A from Clostridium botulinum (strain 657 / Type Ba4).